A 756-amino-acid polypeptide reads, in one-letter code: Sodium/hydrogen exchanger 8 (756 aa).

The Extracellular segment spans residues 1-31 (MTSIIGAALPYKSPEKAIASSSYSAENDSSP). Residue Asn27 is glycosylated (N-linked (GlcNAc...) asparagine). A helical membrane pass occupies residues 32-52 (VDAVIFAGTSLVLGTACRYLF). Residues 53–56 (NGTR) are Cytoplasmic-facing. The chain crosses the membrane as a helical span at residues 57-77 (VPYTVVLLVIGIFLGSLEYGT). Topologically, residues 78-89 (KHNLGKLGHGIR) are extracellular. Residues 90–110 (IWNGINPDLLLAVFLPVLLFE) traverse the membrane as a helical segment. Residues 111–125 (SSFSMDVHQIKRCMG) are Cytoplasmic-facing. The helical transmembrane segment at 126–146 (QMVLLAGPGVLISTFCLGALI) threads the bilayer. The Extracellular portion of the chain corresponds to 147-157 (KLTFPYNWDWK). A helical transmembrane segment spans residues 158 to 178 (TSLLLGGLLGATDPVAVVALL). The Cytoplasmic portion of the chain corresponds to 179–194 (KELGASKKMTTLIDGE). The chain crosses the membrane as a helical span at residues 195-215 (SLMNDGVSVVVFQLFFKMVMG). At 216 to 225 (HNSDWGSIIK) the chain is on the extracellular side. The helical transmembrane segment at 226 to 248 (FLVQNSFGAVGIGLAFGIASVFW) threads the bilayer. Over 249–251 (LKF) the chain is Cytoplasmic. A helical transmembrane segment spans residues 252–271 (IFNDTVAQITVTLSASYFAY). Residues 272-276 (YTAQE) lie on the Extracellular side of the membrane. Residues 277–297 (WAGVSGILTVMILGMFFAAFA) form a helical membrane-spanning segment. At 298 to 311 (RTAFKGDSHQSLHH) the chain is on the cytoplasmic side. Residues 312 to 332 (FWEMAAYIANTLVFMLSGVII) traverse the membrane as a helical segment. The Extracellular portion of the chain corresponds to 333–350 (AESVLSGQTISYKGNSWS). The chain crosses the membrane as a helical span at residues 351 to 371 (FLFLLYLYVQLSRCVVVGVLY). Residues 372–385 (PLLCRSGYGLDWKE) are Cytoplasmic-facing. The helical transmembrane segment at 386–406 (SIILTWSGLRGAVSLSLALSV) threads the bilayer. At 407–422 (KQSSGNSYLSSDTGTR) the chain is on the extracellular side. Residues 423–443 (FLFLTGGIVFLTLVVNGSTTQ) traverse the membrane as a helical segment. At 444-756 (LLLHLLRMDT…RSLAIGETDA (313 aa)) the chain is on the cytoplasmic side.

This sequence belongs to the monovalent cation:proton antiporter 1 (CPA1) transporter (TC 2.A.36) family.

The protein localises to the cell membrane. It catalyses the reaction Na(+)(in) + H(+)(out) = Na(+)(out) + H(+)(in). The enzyme catalyses K(+)(in) + H(+)(out) = K(+)(out) + H(+)(in). In terms of biological role, may act in low affinity electroneutral exchange of protons for cations such as Na(+) or K(+) across membranes. May also exchange Li(+) and Cs(+) with a lower affinity. This is Sodium/hydrogen exchanger 8 (NHX8) from Arabidopsis thaliana (Mouse-ear cress).